We begin with the raw amino-acid sequence, 687 residues long: ERI1 exoribonuclease 2 (687 aa).

An Exonuclease domain is found at L38–A226. Mg(2+)-binding residues include D42, E44, and D156. E44 serves as the catalytic Proton acceptor. Residue E44 participates in AMP binding. The active-site Proton acceptor is the H213. H213 serves as a coordination point for AMP. D218 contributes to the Mg(2+) binding site. Residues C595, C597, C620, and C633 each coordinate Zn(2+). A GRF-type zinc finger spans residues C595–V642.

It belongs to the ERI2 family. It depends on Mg(2+) as a cofactor.

The protein is ERI1 exoribonuclease 2 (eri2) of Xenopus laevis (African clawed frog).